A 255-amino-acid polypeptide reads, in one-letter code: Proteasome subunit alpha (255 aa).

Over residues 190-201 the composition is skewed to polar residues; the sequence is PSTSGASGNGET. Positions 190–255 are disordered; sequence PSTSGASGNG…DKSSGDGEQN (66 aa). The segment covering 202–217 has biased composition (basic and acidic residues); sequence EPSKLEVAILDRERPG.

This sequence belongs to the peptidase T1A family. As to quaternary structure, the 20S proteasome core is composed of 14 alpha and 14 beta subunits that assemble into four stacked heptameric rings, resulting in a barrel-shaped structure. The two inner rings, each composed of seven catalytic beta subunits, are sandwiched by two outer rings, each composed of seven alpha subunits. The catalytic chamber with the active sites is on the inside of the barrel. Has a gated structure, the ends of the cylinder being occluded by the N-termini of the alpha-subunits. Is capped by the proteasome-associated ATPase, ARC.

Its subcellular location is the cytoplasm. Its pathway is protein degradation; proteasomal Pup-dependent pathway. The formation of the proteasomal ATPase ARC-20S proteasome complex, likely via the docking of the C-termini of ARC into the intersubunit pockets in the alpha-rings, may trigger opening of the gate for substrate entry. Interconversion between the open-gate and close-gate conformations leads to a dynamic regulation of the 20S proteasome proteolysis activity. Functionally, component of the proteasome core, a large protease complex with broad specificity involved in protein degradation. The sequence is that of Proteasome subunit alpha from Saccharomonospora viridis (strain ATCC 15386 / DSM 43017 / JCM 3036 / CCUG 5913 / NBRC 12207 / NCIMB 9602 / P101) (Thermoactinomyces viridis).